The primary structure comprises 65 residues: Trypsin inhibitor (65 aa).

Homotrimer.

This Zea mays (Maize) protein is Trypsin inhibitor.